We begin with the raw amino-acid sequence, 475 residues long: Bifunctional protein HldE (475 aa).

The tract at residues 1–318 (MMQYSPKFNN…ENAIHHREET (318 aa)) is ribokinase. Residue 195-198 (NMSE) coordinates ATP. Residue aspartate 264 is part of the active site. The segment at 344-475 (MTNGCFDILH…NVIKKIQASK (132 aa)) is cytidylyltransferase.

The protein in the N-terminal section; belongs to the carbohydrate kinase PfkB family. This sequence in the C-terminal section; belongs to the cytidylyltransferase family. In terms of assembly, homodimer.

It catalyses the reaction D-glycero-beta-D-manno-heptose 7-phosphate + ATP = D-glycero-beta-D-manno-heptose 1,7-bisphosphate + ADP + H(+). It carries out the reaction D-glycero-beta-D-manno-heptose 1-phosphate + ATP + H(+) = ADP-D-glycero-beta-D-manno-heptose + diphosphate. It functions in the pathway nucleotide-sugar biosynthesis; ADP-L-glycero-beta-D-manno-heptose biosynthesis; ADP-L-glycero-beta-D-manno-heptose from D-glycero-beta-D-manno-heptose 7-phosphate: step 1/4. It participates in nucleotide-sugar biosynthesis; ADP-L-glycero-beta-D-manno-heptose biosynthesis; ADP-L-glycero-beta-D-manno-heptose from D-glycero-beta-D-manno-heptose 7-phosphate: step 3/4. In terms of biological role, catalyzes the phosphorylation of D-glycero-D-manno-heptose 7-phosphate at the C-1 position to selectively form D-glycero-beta-D-manno-heptose-1,7-bisphosphate. Catalyzes the ADP transfer from ATP to D-glycero-beta-D-manno-heptose 1-phosphate, yielding ADP-D-glycero-beta-D-manno-heptose. The protein is Bifunctional protein HldE of Actinobacillus pleuropneumoniae serotype 5b (strain L20).